Reading from the N-terminus, the 312-residue chain is Olfactory receptor-like protein COR5 (312 aa).

Topologically, residues 1 to 26 are extracellular; it reads MALGNCTTPTTFILSGLTDNPRLQMP. N5 carries N-linked (GlcNAc...) asparagine glycosylation. The helical transmembrane segment at 27–49 threads the bilayer; the sequence is LFMVFLAIYTITLLANLGLIALI. At 50 to 57 the chain is on the cytoplasmic side; it reads SVDFHLQT. The helical transmembrane segment at 58–79 threads the bilayer; sequence PMYIFLQNLSFTDAAYSTVITP. At 80 to 100 the chain is on the extracellular side; the sequence is KMLATFLEERRTISYVGCILQ. Cysteines 97 and 179 form a disulfide. A helical transmembrane segment spans residues 101 to 120; that stretch reads YFSFVLLTSSECLLLAVMAY. The Cytoplasmic segment spans residues 121-139; it reads DRYVAICKPLLYPAIMTKA. A helical membrane pass occupies residues 140-164; sequence VCWRLVEGLYSLAFLNSLVHTSGLL. The Extracellular segment spans residues 165 to 205; it reads KLSFCSSNVVNHFFCDNSPLFQISSSSTTLNELLVFIFGSW. A helical membrane pass occupies residues 206–226; that stretch reads FAMSSIITTPISYVFIILTVV. The Cytoplasmic segment spans residues 227 to 239; the sequence is RIRSKDGKYKAFS. The helical transmembrane segment at 240-260 threads the bilayer; the sequence is TCTSHLMAVSLFHGTVIFMYL. The Extracellular segment spans residues 261–271; sequence RPVKLFSLDTD. Residues 272–292 form a helical membrane-spanning segment; that stretch reads KIASLFYTVVIPMLNPLIYSW. Over 293–312 the chain is Cytoplasmic; the sequence is RNKEVKDALRRVIATNVWIH.

It belongs to the G-protein coupled receptor 1 family.

It is found in the cell membrane. Odorant receptor. The chain is Olfactory receptor-like protein COR5 (COR5) from Gallus gallus (Chicken).